Consider the following 317-residue polypeptide: Bile salt hydrolase/transferase (317 aa).

The active-site Nucleophile; acyl-thioester intermediate is Cys2. Deoxycholate-binding residues include Cys2 and Arg18. Residue Asn82 participates in taurine binding.

It belongs to the peptidase C59 family. Homotetramer. The tetramer consists of a dimer of dimers.

The enzyme catalyses glycocholate + H2O = cholate + glycine. It carries out the reaction glycodeoxycholate + H2O = deoxycholate + glycine. It catalyses the reaction chenodeoxycholate + glycine = glycochenodeoxycholate + H2O. The catalysed reaction is cholate + taurine = taurocholate + H2O. The enzyme catalyses taurodeoxycholate + H2O = deoxycholate + taurine. It carries out the reaction taurochenodeoxycholate + H2O = chenodeoxycholate + taurine. It catalyses the reaction an L-alpha-amino acid + cholate = an N-choloyl-L-alpha-amino acid + H2O. The catalysed reaction is an L-alpha-amino acid + taurocholate = an N-choloyl-L-alpha-amino acid + taurine. The enzyme catalyses cholate + L-alanine = L-alanocholate + H2O. It carries out the reaction taurocholate + L-alanine = L-alanocholate + taurine. It catalyses the reaction cholate + L-serine = L-serocholate + H2O. The catalysed reaction is taurocholate + L-serine = L-serocholate + taurine. The enzyme catalyses cholate + L-histidine = L-histidocholate + H2O. It carries out the reaction taurocholate + L-histidine = L-histidocholate + taurine. It participates in lipid metabolism; bile acid biosynthesis. Hydrolase activity is competitively inhibited by the products cholate (CA) and deoxycholate (DCA), and by phenylacetate and 4-aminophenylacetate. Penicillin V and penicillin G show mixed inhibition. Strongly inhibited by thiol enzyme inhibitors in vitro. Functionally, possesses dual functions in bile acid metabolism. Acts as a bile salt hydrolase that catalyzes the deconjugation of glycine- and taurine-linked bile salts, which occurs naturally in the intestines of humans, releasing amino acid residues and deconjugated bile salts (bile acids). Can hydrolyze the amide bond in all six major human conjugated bile salts, namely glycocholate (GCA), glycodeoxycholate (GDCA), glycochenodeoxycholate (GCDCA), taurocholate (TCA), taurodeoxycholate (TDCA) and taurochenodeoxycholate (TCDCA). Shows a slight preference for glycine-conjugated bile acids as substrates. Also acts as an amine N-acyltransferase that conjugates a wide variety of amino acids to conjugated and non-conjugated bile acids, thus producing bacterial bile acid amidates (BBAAs) - also named microbially conjugated bile acids (MCBAs) - in the gastrointestinal tract. These BBAAs may facilitate communication between the microbiota and host through the activation of human ligand-activated transcription factors. Is totally inactive toward penicillin V. The chain is Bile salt hydrolase/transferase from Bifidobacterium longum.